The chain runs to 503 residues: Probable cytosol aminopeptidase (503 aa).

Positions 270 and 275 each coordinate Mn(2+). Lys-282 is a catalytic residue. 3 residues coordinate Mn(2+): Asp-293, Asp-352, and Glu-354. Residue Arg-356 is part of the active site.

The protein belongs to the peptidase M17 family. It depends on Mn(2+) as a cofactor.

Its subcellular location is the cytoplasm. The catalysed reaction is Release of an N-terminal amino acid, Xaa-|-Yaa-, in which Xaa is preferably Leu, but may be other amino acids including Pro although not Arg or Lys, and Yaa may be Pro. Amino acid amides and methyl esters are also readily hydrolyzed, but rates on arylamides are exceedingly low.. It catalyses the reaction Release of an N-terminal amino acid, preferentially leucine, but not glutamic or aspartic acids.. Presumably involved in the processing and regular turnover of intracellular proteins. Catalyzes the removal of unsubstituted N-terminal amino acids from various peptides. The protein is Probable cytosol aminopeptidase of Escherichia fergusonii (strain ATCC 35469 / DSM 13698 / CCUG 18766 / IAM 14443 / JCM 21226 / LMG 7866 / NBRC 102419 / NCTC 12128 / CDC 0568-73).